The following is a 246-amino-acid chain: 2,5-diamino-6-ribosylamino-4(3H)-pyrimidinone 5'-phosphate reductase (246 aa).

Residues T78, D82, L163, and 186 to 190 (GAEVL) each bind NADP(+).

Belongs to the HTP reductase family. In terms of assembly, homodimer.

The enzyme catalyses 2,5-diamino-6-(1-D-ribitylamino)pyrimidin-4(3H)-one 5'-phosphate + NADP(+) = 2,5-diamino-6-(1-D-ribosylamino)pyrimidin-4(3H)-one 5'-phosphate + NADPH + H(+). It catalyses the reaction 2,5-diamino-6-(1-D-ribitylamino)pyrimidin-4(3H)-one 5'-phosphate + NAD(+) = 2,5-diamino-6-(1-D-ribosylamino)pyrimidin-4(3H)-one 5'-phosphate + NADH + H(+). It functions in the pathway cofactor biosynthesis; riboflavin biosynthesis. Functionally, catalyzes an early step in riboflavin biosynthesis, the NADPH-dependent reduction of the ribose side chain of 2,5-diamino-6-ribosylamino-4(3H)-pyrimidinone 5'-phosphate, yielding 2,5-diamino-6-ribitylamino-4(3H)-pyrimidinone 5'-phosphate. The polypeptide is 2,5-diamino-6-ribosylamino-4(3H)-pyrimidinone 5'-phosphate reductase (RIB7) (Eremothecium gossypii (strain ATCC 10895 / CBS 109.51 / FGSC 9923 / NRRL Y-1056) (Yeast)).